Reading from the N-terminus, the 425-residue chain is Glucose-1-phosphate adenylyltransferase (425 aa).

Alpha-D-glucose 1-phosphate is bound by residues Tyr114, Gly179, 194–195 (EK), and Ser212.

Belongs to the bacterial/plant glucose-1-phosphate adenylyltransferase family. Homotetramer.

The catalysed reaction is alpha-D-glucose 1-phosphate + ATP + H(+) = ADP-alpha-D-glucose + diphosphate. Its pathway is glycan biosynthesis; glycogen biosynthesis. In terms of biological role, involved in the biosynthesis of ADP-glucose, a building block required for the elongation reactions to produce glycogen. Catalyzes the reaction between ATP and alpha-D-glucose 1-phosphate (G1P) to produce pyrophosphate and ADP-Glc. This Pectobacterium carotovorum subsp. carotovorum (strain PC1) protein is Glucose-1-phosphate adenylyltransferase.